The primary structure comprises 394 residues: Probable cytosolic iron-sulfur protein assembly protein 1 (394 aa).

WD repeat units follow at residues 10–49 (AHND…NFPL), 56–108 (AHKR…EQDS), 144–184 (GHEN…EEFE), 191–230 (DHQH…DDWS), 237–284 (GHGG…TEQI), 313–352 (IHKY…KWEI), and 359–394 (AHGV…IWEP).

This sequence belongs to the WD repeat CIA1 family. In terms of assembly, interacts with NAR1.

The protein resides in the cytoplasm. It localises to the nucleus. In terms of biological role, essential component of the cytosolic iron-sulfur (Fe/S) protein assembly machinery. Required for the maturation of extramitochondrial Fe/S proteins. This is Probable cytosolic iron-sulfur protein assembly protein 1 from Debaryomyces hansenii (strain ATCC 36239 / CBS 767 / BCRC 21394 / JCM 1990 / NBRC 0083 / IGC 2968) (Yeast).